The chain runs to 210 residues: Regulator of G-protein signaling 17 (210 aa).

The segment at 1-21 (MRKRQQSQNEGTQAVSQAPGN) is disordered. The region spanning 84–200 (NFDKMMKTPA…LNSQIYKAFV (117 aa)) is the RGS domain. Tyr-137 is subject to Phosphotyrosine.

As to quaternary structure, interacts with GNAI1 and GNAQ. Interacts with GNAZ and GNAI2. Interacts with OPRM1. Forms a complex with mu-opioid receptors and G(alpha)z/i2 subunits, including GNAZ and GNAI2; the formation of this complex results in mu-opioid receptor desensitization. Interacts with HINT1. Post-translationally, N- and O-glycosylated in synapsomal membranes. In terms of processing, serine phosphorylated in synapsomal membranes. Sumoylated with SUMO1 and SUM02 in synaptosomes. The sumoylated forms act as a scaffold for sequestering mu-opioid receptor-activated G(alpha) subunits. Desumoylated by HINT1. As to expression, detected in brain (at protein level). Highly expressed in the hypothalamus, periaqueductal gray matter, and pons-medulla. Lower levels in the thalamus, cortex and spinal cord. Weak expression in the striatum and cerebellum.

The protein localises to the membrane. It localises to the synapse. It is found in the synaptosome. The protein resides in the nucleus. Its subcellular location is the cytoplasm. Functionally, regulates G protein-coupled receptor signaling cascades, including signaling via muscarinic acetylcholine receptor CHRM2 and dopamine receptor DRD2. Inhibits signal transduction by increasing the GTPase activity of G protein alpha subunits, thereby driving them into their inactive GDP-bound form. Binds selectively to GNAZ and GNAI2 subunits, accelerates their GTPase activity and regulates their signaling activities. Negatively regulates mu-opioid receptor-mediated activation of the G-proteins. This is Regulator of G-protein signaling 17 (Rgs17) from Mus musculus (Mouse).